A 617-amino-acid polypeptide reads, in one-letter code: Tetratricopeptide repeat protein 39B (617 aa).

TPR repeat units follow at residues 328-361 (SLILFYHARIELLKGNAEKAQETFRKCISVQEEW) and 561-594 (PFTLFELAFLYKSQGEIDKAIKVLETARNNYKDY).

The protein belongs to the TTC39 family.

Its function is as follows. Regulates high density lipoprotein (HDL) cholesterol metabolism by promoting the ubiquitination and degradation of the oxysterols receptors LXR (NR1H2 and NR1H3). The protein is Tetratricopeptide repeat protein 39B (Ttc39b) of Rattus norvegicus (Rat).